We begin with the raw amino-acid sequence, 655 residues long: Protein nipi-3 (655 aa).

Residues 1–35 (MARTKCKTKTVANPRTGVRKTAKDLSEPVRQDAVS) are disordered. Positions 21–35 (TAKDLSEPVRQDAVS) are enriched in basic and acidic residues. In terms of domain architecture, Protein kinase spans 200–470 (IGIFVIYGTG…NQVNGDFPEI (271 aa)). ATP contacts are provided by residues 206–214 (YGTGLVTRA) and Lys-235.

This sequence belongs to the protein kinase superfamily. CAMK Ser/Thr protein kinase family. In terms of assembly, may interact with transcription factor cebp-1 (via N-terminus). In terms of tissue distribution, expressed in epidermis, pharynx, intestine, a subset of head neurons and motoneurons.

The protein localises to the nucleus. Adapter protein that regulates different signaling pathways. Required for larval development and viability. Involved in negatively modulating pmk-1 p38/MAPK signaling. Involved in innate immunity, acting either in a manner dependent upon, or independent of, the pmk-1 or pmk-3 p38/MAPK pathways. Has a protective role in response to infection by the Gram-negative bacterium P.aeruginosa, acting by negatively modulating expression of cebp-1, and regulating the pmk-1 p38/MAPK pathway, leading to activation of transcription factor skn-1. Required to prevent P.aeruginosa toxin ToxA-mediated lethality, probably acting via modulating the effects of translational inhibition caused by the toxin. By regulating the up-regulation in the epidermis of antimicrobial peptides nlp-29 and nlp-31, plays a role in resistance to fungal infection. This chain is Protein nipi-3, found in Caenorhabditis elegans.